The chain runs to 213 residues: Thymidylate kinase (213 aa).

10–17 (GPDGAGKT) lines the ATP pocket.

The protein belongs to the thymidylate kinase family.

It catalyses the reaction dTMP + ATP = dTDP + ADP. In terms of biological role, phosphorylation of dTMP to form dTDP in both de novo and salvage pathways of dTTP synthesis. This chain is Thymidylate kinase, found in Limosilactobacillus reuteri (strain DSM 20016) (Lactobacillus reuteri).